The following is a 358-amino-acid chain: 3-isopropylmalate dehydrogenase (358 aa).

Substrate contacts are provided by Arg-92, Arg-102, Arg-130, and Asp-224. Mg(2+) is bound by residues Asp-224, Asp-248, and Asp-252. 282 to 294 serves as a coordination point for NAD(+); sequence GSAPDIAGQGIAN.

The protein belongs to the isocitrate and isopropylmalate dehydrogenases family. LeuB type 1 subfamily. In terms of assembly, homodimer. Mg(2+) is required as a cofactor. Mn(2+) serves as cofactor.

It localises to the cytoplasm. The enzyme catalyses (2R,3S)-3-isopropylmalate + NAD(+) = 4-methyl-2-oxopentanoate + CO2 + NADH. Its pathway is amino-acid biosynthesis; L-leucine biosynthesis; L-leucine from 3-methyl-2-oxobutanoate: step 3/4. Catalyzes the oxidation of 3-carboxy-2-hydroxy-4-methylpentanoate (3-isopropylmalate) to 3-carboxy-4-methyl-2-oxopentanoate. The product decarboxylates to 4-methyl-2 oxopentanoate. This Bordetella parapertussis (strain 12822 / ATCC BAA-587 / NCTC 13253) protein is 3-isopropylmalate dehydrogenase.